Reading from the N-terminus, the 530-residue chain is TNF receptor-associated factor 6 (530 aa).

An interaction with TAX1BP1 region spans residues 1 to 362 (MSLLNCENSC…EAQQCNGIYI (362 aa)). The RING-type zinc finger occupies 70–109 (CPICLMALREAVQTPCGHRFCKACIIKSIRDAGHKCPVDN). Residue lysine 124 forms a Glycyl lysine isopeptide (Lys-Gly) (interchain with G-Cter in SUMO); alternate linkage. A Glycyl lysine isopeptide (Lys-Gly) (interchain with G-Cter in ubiquitin); alternate cross-link involves residue lysine 124. Lysine 142 is covalently cross-linked (Glycyl lysine isopeptide (Lys-Gly) (interchain with G-Cter in SUMO)). TRAF-type zinc fingers lie at residues 150–202 (DHQV…EEKE) and 203–259 (IHDQ…NHLA). Residues 299–356 (EDPNYEETIKQLESRLVRQDHQIRELTAKMETQSMYVGELKRTIRTLEDKVAEMEAQQ) are a coiled coil. A Glycyl lysine isopeptide (Lys-Gly) (interchain with G-Cter in ubiquitin) cross-link involves residue lysine 327. One can recognise an MATH domain in the interval 358–507 (NGIYIWKIGN…DDTLLVRCEV (150 aa)). Residues 363-530 (WKIGNFGMHL…FQPRSTDAGV (168 aa)) form an interaction with TANK region. Residue lysine 461 forms a Glycyl lysine isopeptide (Lys-Gly) (interchain with G-Cter in SUMO) linkage.

This sequence belongs to the TNF receptor-associated factor family. A subfamily. Homotrimer. Homooligomer. N-terminal region is dimeric while C-terminal region is trimeric; maybe providing a mode of oligomerization. Upon IL1B treatment, forms a complex with PELI1, IRAK1, IRAK4 and MYD88; this complex recruits MAP3K7/TAK1, TAB1 and TAB2 to mediate NF-kappa-B activation. Direct binding of SMAD6 to PELI1 prevents the complex formation and hence negatively regulates IL1R-TLR signaling and eventually NF-kappa-B-mediated gene expression. Binds to TNFRSF5/CD40 and TNFRSF11A/RANK. Associates with NGFR, TNFRSF17, IRAK2, IRAK3, PELI2, PELI3, RIPK2, MAP3K1, MAP3K5, MAP3K14, CSK, TRAF, TRAF-interacting protein TRIP and TNF receptor associated protein TDP2. Binds UBE2V1. Interacts with MAVS/IPS1. Interacts with TAX1BP1; this interaction mediates deubiquitination of TRAF6 and inhibition of NF-kappa-B activation. Interacts with IL17R. Interacts with SQSTM1 bridging NTRK1 and NGFR. Forms a ternary complex with SQSTM1 and PRKCZ. Interacts with IL1RL1. Interacts with AJUBA. Interacts with TRAFD1. Interacts with TICAM2. Interacts with ZFAND5. Interacts with ARRB1 and ARRB2. Interacts with MAP3K7 and TAB1/MAP3K7IP1; during IL-1 signaling. Interacts with UBE2N. Interacts with TGFBR1, HDAC1 and RANGAP1. Interacts with AKT1, AKT2 and AKT3. Interacts (via TRAF domains) with NUMBL (via C-terminal). Interacts (via TRAF domains) with DYNC2I2 (via WD domains). Interacts with RBCK1. Interacts with LIMD1 (via LIM domains). Interacts with RSAD2/viperin. Interacts with IFIT3 (via N-terminus). Interacts (via C-terminus) with EIF2AK2/PKR (via the kinase catalytic domain). Interacts with CARD14. Interacts with CD40 and MAP3K8; the interaction is required for ERK activation. Interacts with TICAM1 and this interaction is enhanced in the presence of WDFY1. Interacts with TANK; this interaction increases in response to DNA damage. Interacts with USP10; this interaction increases in response to DNA damage. Interacts with ZC3H12A; this interaction increases in response to DNA damage and is stimulated by TANK. Interacts with WDFY3. Interacts with TRIM13. Interacts with GPS2. Interacts (via C-terminus) with SASH1. Interacts with LRRC19. Interacts with IL17RA and TRAF3IP2. Interacts with TOMM70. Interacts with AMBRA1; interaction is required to mediate 'Lys-63'-linked ubiquitination of ULK1. Interacts with CRBN; this interaction inhibits TLR4-mediated signaling by preventing TRAF6-mediated ubiquitination of ECSIT. In terms of assembly, (Microbial infection) Interacts (via N-terminal RING domain) with Toxoplasma gondii GRA7; the interaction plays a role in GRA7-induced pro-inflammatory cytokine production in mouse macrophages. Sumoylated on Lys-124, Lys-142 and Lys-461 with SUMO1. In terms of processing, polyubiquitinated on Lys-124 by TRAF3IP2; after cell stimulation with IL17A. Polyubiquitinated; after cell stimulation with IL1B or TGFB. This ligand-induced cell stimulation leads to dimerization/oligomerization of TRAF6 molecules, followed by auto-ubiquitination which involves UBE2N and UBE2V1 and leads to TRAF6 activation. This 'Lys-63' site-specific poly-ubiquitination appears to be associated with the activation of signaling molecules. Endogenous autoubiquitination occurs only for the cytoplasmic form. Deubiquitinated by USP10 in a TANK-dependent manner, leading to the negative regulation of NF-kappa-B signaling upon DNA damage. LRRC19 induces 'Lys-63' ubiquitination. Ubiquitinated at Lys-327 by the SCF(FBXL2) complex, leading to its degradation by the proteasome. In terms of tissue distribution, highly expressed in brain, lung, liver, skeletal muscle, and kidney; lower expression in heart, spleen, and testis.

The protein resides in the cytoplasm. It is found in the cell cortex. The protein localises to the nucleus. Its subcellular location is the lipid droplet. The catalysed reaction is S-ubiquitinyl-[E2 ubiquitin-conjugating enzyme]-L-cysteine + [acceptor protein]-L-lysine = [E2 ubiquitin-conjugating enzyme]-L-cysteine + N(6)-ubiquitinyl-[acceptor protein]-L-lysine.. The protein operates within protein modification; protein ubiquitination. E3 ubiquitin ligase that, together with UBE2N and UBE2V1, mediates the synthesis of 'Lys-63'-linked-polyubiquitin chains conjugated to proteins, such as ECSIT, IKBKG, IRAK1, AKT1 and AKT2. Also mediates ubiquitination of free/unanchored polyubiquitin chain that leads to MAP3K7 activation. Leads to the activation of NF-kappa-B and JUN. Seems to also play a role in dendritic cells (DCs) maturation and/or activation. Represses c-Myb-mediated transactivation, in B-lymphocytes. Adapter protein that seems to play a role in signal transduction initiated via TNF receptor, IL-1 receptor and IL-17 receptor. Regulates osteoclast differentiation by mediating the activation of adapter protein complex 1 (AP-1) and NF-kappa-B, in response to RANK-L stimulation. Together with MAP3K8, mediates CD40 signals that activate ERK in B-cells and macrophages, and thus may play a role in the regulation of immunoglobulin production. Acts as a regulator of the JNK and NF-kappa-B signaling pathways by initiating assembly of heterotypic 'Lys-63'-/'Lys-48'-linked branched ubiquitin chains that are then recognized by TAB2: TRAF6 catalyzes initial 'Lys-63'-linked-polyubiquitin chains that are then branched via 'Lys-48'-linked polyubiquitin by HUWE1. 'Lys-63'-/'Lys-48'-linked branched ubiquitin chains protect 'Lys-63'-linkages from CYLD deubiquitination. Also participates in the TCR signaling by ubiquitinating LAT. The sequence is that of TNF receptor-associated factor 6 (Traf6) from Mus musculus (Mouse).